A 411-amino-acid polypeptide reads, in one-letter code: 2,3-bisphosphoglycerate-independent phosphoglycerate mutase (411 aa).

Residues 164–190 (VSSNDPKKEGVQPLTIRPGSDDPADAK) are disordered.

This sequence belongs to the BPG-independent phosphoglycerate mutase family. A-PGAM subfamily.

The enzyme catalyses (2R)-2-phosphoglycerate = (2R)-3-phosphoglycerate. It participates in carbohydrate degradation; glycolysis; pyruvate from D-glyceraldehyde 3-phosphate: step 3/5. Functionally, catalyzes the interconversion of 2-phosphoglycerate and 3-phosphoglycerate. The polypeptide is 2,3-bisphosphoglycerate-independent phosphoglycerate mutase (Methanoculleus marisnigri (strain ATCC 35101 / DSM 1498 / JR1)).